The primary structure comprises 144 residues: Catabolic 3-dehydroquinase 1 (144 aa).

The active-site Proton acceptor is the Y24. The substrate site is built by N75, H81, and D88. Residue H101 is the Proton donor of the active site. Residues 102-103 (IS) and R112 contribute to the substrate site.

The protein belongs to the type-II 3-dehydroquinase family. As to quaternary structure, homododecamer. Adopts a ring-like structure, composed of an arrangement of two hexameric rings stacked on top of one another.

It catalyses the reaction 3-dehydroquinate = 3-dehydroshikimate + H2O. It functions in the pathway aromatic compound metabolism; 3,4-dihydroxybenzoate biosynthesis; 3,4-dihydroxybenzoate from 3-dehydroquinate: step 1/2. Its function is as follows. Is involved in the catabolism of quinate. Allows the utilization of quinate as carbon source via the beta-ketoadipate pathway. The chain is Catabolic 3-dehydroquinase 1 from Fusarium vanettenii (strain ATCC MYA-4622 / CBS 123669 / FGSC 9596 / NRRL 45880 / 77-13-4) (Fusarium solani subsp. pisi).